The sequence spans 86 residues: Toxin To8 (86 aa).

Positions 1–20 are cleaved as a signal peptide; that stretch reads MTRFVLFISCFFLIGMVVEC. Residues 21 to 83 form the LCN-type CS-alpha/beta domain; sequence KEGYLLGSRG…LWESDTNECG (63 aa). Cystine bridges form between cysteine 31/cysteine 82, cysteine 35/cysteine 57, cysteine 43/cysteine 63, and cysteine 47/cysteine 65. Cysteine 82 is modified (cysteine amide).

Belongs to the long (4 C-C) scorpion toxin superfamily. Sodium channel inhibitor family. Beta subfamily. As to expression, expressed by the venom gland.

The protein resides in the secreted. Beta toxins bind voltage-independently at site-4 of sodium channels (Nav) and shift the voltage of activation toward more negative potentials thereby affecting sodium channel activation and promoting spontaneous and repetitive firing. The sequence is that of Toxin To8 from Tityus obscurus (Amazonian scorpion).